The following is a 62-amino-acid chain: Ubiquinol-cytochrome c reductase complex 6.7 kDa protein (62 aa).

The Mitochondrial matrix segment spans residues 2–25 (TSPAAAGNGLFKFLRPKLRPQSTD). Residues 26–44 (IQAAAGWGVAAVTGALWVI) traverse the membrane as a helical segment. The Mitochondrial intermembrane segment spans residues 45 to 62 (QPWDFLRKTFIEKQEEEK).

Belongs to the UQCR11/QCR10 family. Component of the ubiquinol-cytochrome c oxidoreductase (cytochrome b-c1 complex, complex III, CIII), a multisubunit enzyme composed of 3 respiratory subunits cytochrome b, cytochrome c1 and Rieske protein, 2 core protein subunits, and additional low-molecular weight protein subunits. The complex exists as an obligatory dimer and forms supercomplexes (SCs) in the inner mitochondrial membrane with cytochrome c oxidase (complex IV, CIV).

The protein localises to the mitochondrion inner membrane. Component of the ubiquinol-cytochrome c oxidoreductase, a multisubunit transmembrane complex that is part of the mitochondrial electron transport chain which drives oxidative phosphorylation. The respiratory chain contains 3 multisubunit complexes succinate dehydrogenase (complex II, CII), ubiquinol-cytochrome c oxidoreductase (cytochrome b-c1 complex, complex III, CIII) and cytochrome c oxidase (complex IV, CIV), that cooperate to transfer electrons derived from NADH and succinate to molecular oxygen, creating an electrochemical gradient over the inner membrane that drives transmembrane transport and the ATP synthase. The cytochrome b-c1 complex catalyzes electron transfer from ubiquinol to cytochrome c, linking this redox reaction to translocation of protons across the mitochondrial inner membrane, with protons being carried across the membrane as hydrogens on the quinol. In the process called Q cycle, 2 protons are consumed from the matrix, 4 protons are released into the intermembrane space and 2 electrons are passed to cytochrome c. QCR10 has a role in CIII assembly and RIP1 stability. The sequence is that of Ubiquinol-cytochrome c reductase complex 6.7 kDa protein from Solanum tuberosum (Potato).